The chain runs to 722 residues: Solute carrier organic anion transporter family member 4A1 (722 aa).

Positions 1–52 (MPLHQLGDKPLTFPSPNSAMENGLDHTPPSRRASPGTPLSPGSLRSAAHSPL) are disordered. The Cytoplasmic portion of the chain corresponds to 1-103 (MPLHQLGDKP…PCLQVLNTPK (103 aa)). Residue Ser-34 is modified to Phosphoserine. Phosphothreonine is present on Thr-37. Residues Ser-40, Ser-43, Ser-46, and Ser-50 each carry the phosphoserine modification. The helical transmembrane segment at 104-124 (GILFFLCAAAFLQGMTVNGFI) threads the bilayer. At 125-143 (NTVITSLERRYDLHSYQSG) the chain is on the extracellular side. A helical membrane pass occupies residues 144–164 (LIASSYDIAACLCLTFVSYFG). The Cytoplasmic portion of the chain corresponds to 165 to 170 (GSGHKP). The chain crosses the membrane as a helical span at residues 171–195 (RWLGWGVLLMGTGSLVFALPHFTAG). At 196-222 (RYEVELDAGVRTCPANPGAVCADSTSG) the chain is on the extracellular side. A helical transmembrane segment spans residues 223–253 (LSRYQLVFMLGQFLHGVGATPLYTLGVTYLD). The Cytoplasmic segment spans residues 254 to 272 (ENVKSSCSPVYIAIFYTAA). Residues 273–293 (ILGPAAGYLIGGALLNIYTEM) form a helical membrane-spanning segment. Over 294–307 (GRRTELTTESPLWV) the chain is Extracellular. A helical membrane pass occupies residues 308–332 (GAWWVGFLGSGAAAFFTAVPILGYP). Topologically, residues 333–378 (RQLPGSQRYAVMRAAEMHQLKDSSRGEASNPDFGKTIRDLPLSIWL) are cytoplasmic. The helical transmembrane segment at 379–400 (LLKNPTFILLCLAGATEATLIT) threads the bilayer. Over 401–420 (GMSTFSPKFLESQFSLSASE) the chain is Extracellular. A helical transmembrane segment spans residues 421–444 (AATLFGYLVVPAGGGGTFLGGFFV). The Cytoplasmic portion of the chain corresponds to 445–448 (NKLR). The chain crosses the membrane as a helical span at residues 449-471 (LRGSAVIKFCLFCTVVSLLGILV). Topologically, residues 472-580 (FSLHCPSVPM…TSTCQRKPLL (109 aa)) are extracellular. A Kazal-like domain is found at 498–555 (LNLTAPCNAACSCQPEHYSPVCGSDGLMYFSLCHAGCPAATETNVDGQKVYRDCSCIP). A glycan (N-linked (GlcNAc...) asparagine) is linked at Asn-499. 3 cysteine pairs are disulfide-bonded: Cys-504/Cys-534, Cys-510/Cys-530, and Cys-519/Cys-553. Asn-557 is a glycosylation site (N-linked (GlcNAc...) asparagine). A helical transmembrane segment spans residues 581-603 (LVFIFVVIFFTFLSSIPALTATL). Residues 604 to 612 (RCVRDPQRS) lie on the Cytoplasmic side of the membrane. A helical membrane pass occupies residues 613 to 638 (FALGIQWIVVRILGGIPGPIAFGWVI). Over 639–671 (DKACLLWQDQCGQQGSCLVYQNSAMSRYILIMG) the chain is Extracellular. The helical transmembrane segment at 672-689 (LLYKVLGVLFFAIACFLY) threads the bilayer. At 690–722 (KPLSESSDGLETCLPSQSSAPDSATDSQLQSSV) the chain is on the cytoplasmic side. Positions 703 to 722 (LPSQSSAPDSATDSQLQSSV) are disordered.

The protein belongs to the organo anion transporter (TC 2.A.60) family. As to expression, widely expressed. Expressed in placental trophoblasts. Expressed in pancreas, kidney, skeletal muscle, liver, lung, brain, heart, colon, small intestine, ovary, testis, prostate, thymus and spleen. In testis, primarily localized to Leydig cells.

Its subcellular location is the cell membrane. It carries out the reaction 3,3',5-triiodo-L-thyronine(out) + L-glutamate(in) = 3,3',5-triiodo-L-thyronine(in) + L-glutamate(out). The catalysed reaction is L-thyroxine(out) + L-glutamate(in) = L-thyroxine(in) + L-glutamate(out). The enzyme catalyses estrone 3-sulfate(out) + L-glutamate(in) = estrone 3-sulfate(in) + L-glutamate(out). It catalyses the reaction taurocholate(out) + L-glutamate(in) = taurocholate(in) + L-glutamate(out). It carries out the reaction 3,3',5-triiodo-L-thyronine(out) = 3,3',5-triiodo-L-thyronine(in). The catalysed reaction is L-thyroxine(out) = L-thyroxine(in). The enzyme catalyses 3,3',5'-triiodo-L-thyronine(out) = 3,3',5'-triiodo-L-thyronine(in). It catalyses the reaction estrone 3-sulfate(out) = estrone 3-sulfate(in). It carries out the reaction 17beta-estradiol 17-O-(beta-D-glucuronate)(out) = 17beta-estradiol 17-O-(beta-D-glucuronate)(in). The catalysed reaction is taurocholate(out) = taurocholate(in). The enzyme catalyses prostaglandin E2(out) = prostaglandin E2(in). In terms of biological role, organic anion antiporter with apparent broad substrate specificity. Recognizes various substrates including thyroid hormones 3,3',5-triiodo-L-thyronine (T3), L-thyroxine (T4) and 3,3',5'-triiodo-L-thyronine (rT3), conjugated steroids such as estrone 3-sulfate and estradiol 17-beta glucuronide, bile acids such as taurocholate and prostanoids such as prostaglandin E2, likely operating in a tissue-specific manner. May be involved in uptake of metabolites from the circulation into organs such as kidney, liver or placenta. Possibly drives the selective transport of thyroid hormones and estrogens coupled to an outward glutamate gradient across the microvillous membrane of the placenta. The transport mechanism, its electrogenicity and potential tissue-specific counterions remain to be elucidated. This Homo sapiens (Human) protein is Solute carrier organic anion transporter family member 4A1 (SLCO4A1).